The following is a 366-amino-acid chain: tRNA pseudouridine synthase B (366 aa).

The active-site Nucleophile is the Asp-44.

It belongs to the pseudouridine synthase TruB family. Type 1 subfamily.

The catalysed reaction is uridine(55) in tRNA = pseudouridine(55) in tRNA. In terms of biological role, responsible for synthesis of pseudouridine from uracil-55 in the psi GC loop of transfer RNAs. The polypeptide is tRNA pseudouridine synthase B (Treponema pallidum (strain Nichols)).